The sequence spans 427 residues: Transcobalamin-2 (427 aa).

Positions 1–18 (MRHLGALLFLLGVLGALA) are cleaved as a signal peptide. Disulfide bonds link Cys-21–Cys-267, Cys-116–Cys-309, and Cys-165–Cys-205. Cob(II)alamin contacts are provided by residues Gln-104, 152 to 156 (TSYYQ), His-190, 190 to 194 (HHSVD), Asn-242, Ser-245, Gln-291, and 395 to 397 (WQL).

It belongs to the eukaryotic cobalamin transport proteins family. As to quaternary structure, interacts with CD320 (via LDL-receptor class A domains).

Its subcellular location is the secreted. Its function is as follows. Primary vitamin B12-binding and transport protein. Delivers cobalamin to cells. This Pongo abelii (Sumatran orangutan) protein is Transcobalamin-2 (TCN2).